Reading from the N-terminus, the 364-residue chain is Aminomethyltransferase (364 aa).

Belongs to the GcvT family. In terms of assembly, the glycine cleavage system is composed of four proteins: P, T, L and H.

The enzyme catalyses N(6)-[(R)-S(8)-aminomethyldihydrolipoyl]-L-lysyl-[protein] + (6S)-5,6,7,8-tetrahydrofolate = N(6)-[(R)-dihydrolipoyl]-L-lysyl-[protein] + (6R)-5,10-methylene-5,6,7,8-tetrahydrofolate + NH4(+). Functionally, the glycine cleavage system catalyzes the degradation of glycine. The sequence is that of Aminomethyltransferase from Shewanella woodyi (strain ATCC 51908 / MS32).